Reading from the N-terminus, the 585-residue chain is Glutamate decarboxylase (585 aa).

The span at 35-56 (KSAVQSGHQGSNNMRDTSSQGM) shows a compositional bias: polar residues. The tract at residues 35-60 (KSAVQSGHQGSNNMRDTSSQGMANKY) is disordered. Lys318 is modified (N6-(pyridoxal phosphate)lysine).

The protein belongs to the group II decarboxylase family. Requires pyridoxal 5'-phosphate as cofactor.

It carries out the reaction L-glutamate + H(+) = 4-aminobutanoate + CO2. The polypeptide is Glutamate decarboxylase (GAD1) (Saccharomyces cerevisiae (strain ATCC 204508 / S288c) (Baker's yeast)).